The chain runs to 644 residues: 1-deoxy-D-xylulose-5-phosphate synthase (644 aa).

Residues H78 and G120–A122 each bind thiamine diphosphate. D149 lines the Mg(2+) pocket. Thiamine diphosphate is bound by residues A150–A151, N178, and E373. N178 contacts Mg(2+).

The protein belongs to the transketolase family. DXPS subfamily. As to quaternary structure, homodimer. It depends on Mg(2+) as a cofactor. Requires thiamine diphosphate as cofactor.

It catalyses the reaction D-glyceraldehyde 3-phosphate + pyruvate + H(+) = 1-deoxy-D-xylulose 5-phosphate + CO2. Its pathway is metabolic intermediate biosynthesis; 1-deoxy-D-xylulose 5-phosphate biosynthesis; 1-deoxy-D-xylulose 5-phosphate from D-glyceraldehyde 3-phosphate and pyruvate: step 1/1. Catalyzes the acyloin condensation reaction between C atoms 2 and 3 of pyruvate and glyceraldehyde 3-phosphate to yield 1-deoxy-D-xylulose-5-phosphate (DXP). The sequence is that of 1-deoxy-D-xylulose-5-phosphate synthase from Chlamydia felis (strain Fe/C-56) (Chlamydophila felis).